The chain runs to 247 residues: tRNA pseudouridine synthase A (247 aa).

The active-site Nucleophile is the D52. Y113 serves as a coordination point for substrate.

Belongs to the tRNA pseudouridine synthase TruA family. Homodimer.

It carries out the reaction uridine(38/39/40) in tRNA = pseudouridine(38/39/40) in tRNA. Functionally, formation of pseudouridine at positions 38, 39 and 40 in the anticodon stem and loop of transfer RNAs. This Bartonella bacilliformis (strain ATCC 35685 / KC583 / Herrer 020/F12,63) protein is tRNA pseudouridine synthase A.